A 245-amino-acid chain; its full sequence is Myozenin-3 (245 aa).

Position 31 is a phosphoserine (S31). A binding to ACTN2, PPP3CA and TCAP region spans residues 50 to 67; sequence LLFQKRQRRVQKFTFELS. Positions 67–108 are binding to FLNC; the sequence is SESLQAILASSARGKVAGRAAQATVPNGLEEQNHHSETHVFQ. Residues 93 to 134 form a disordered region; the sequence is NGLEEQNHHSETHVFQGSPGDPGITHLGAAGTGSVRSPSALA. The interval 180 to 201 is binding to ACTN2; it reads PIPRDYRNFNKTPVPFGGPHVR.

This sequence belongs to the myozenin family. In terms of assembly, interacts with ACTN2, LDB3, FLNC, PPP3CA and TCAP. Expressed specifically in skeletal muscle and is enriched in fast-twitch muscle fibers. Not detected in heart.

It localises to the cytoplasm. The protein resides in the myofibril. It is found in the sarcomere. The protein localises to the z line. Functionally, myozenins may serve as intracellular binding proteins involved in linking Z line proteins such as alpha-actinin, gamma-filamin, TCAP/telethonin, LDB3/ZASP and localizing calcineurin signaling to the sarcomere. Plays an important role in the modulation of calcineurin signaling. May play a role in myofibrillogenesis. This is Myozenin-3 from Mus musculus (Mouse).